Reading from the N-terminus, the 243-residue chain is MLQNIRIVLVETSHTGNMGSVARAMKTMGLTNLWLVNPLVKPDSQAIALAAGASDVIGNAQIVDTLDEALAGCSLVVGTSARSRTLPWPMLDPRECGLKSVAEAANTPVALVFGRERVGLTNDELQKCHYHVAIAANPEYSSLNLAMAVQVIAYEVRMAWLATQENGDAADHEETPYPLVDDLERFYGHLEQTLLSTGFIRENHPGQVMNKLRRLFTRARPESQELNILRGILASIEQQNKGK.

Residues 79 to 81 (TSA), Gly-114, Ile-134, and 141 to 143 (SSL) contribute to the S-adenosyl-L-methionine site.

Belongs to the class IV-like SAM-binding methyltransferase superfamily. RNA methyltransferase TrmH family. In terms of assembly, homodimer.

Its subcellular location is the cytoplasm. It carries out the reaction cytidine(32) in tRNA + S-adenosyl-L-methionine = 2'-O-methylcytidine(32) in tRNA + S-adenosyl-L-homocysteine + H(+). The catalysed reaction is uridine(32) in tRNA + S-adenosyl-L-methionine = 2'-O-methyluridine(32) in tRNA + S-adenosyl-L-homocysteine + H(+). In terms of biological role, catalyzes the formation of 2'O-methylated cytidine (Cm32) or 2'O-methylated uridine (Um32) at position 32 in tRNA. The chain is tRNA (cytidine/uridine-2'-O-)-methyltransferase TrmJ (trmJ) from Salmonella paratyphi A (strain ATCC 9150 / SARB42).